Reading from the N-terminus, the 311-residue chain is Coproporphyrin III ferrochelatase 1 (311 aa).

Fe-coproporphyrin III is bound by residues tyrosine 12, arginine 29, 45-46 (RY), serine 53, and tyrosine 124. Histidine 182 and glutamate 263 together coordinate Fe(2+).

This sequence belongs to the ferrochelatase family.

Its subcellular location is the cytoplasm. It carries out the reaction Fe-coproporphyrin III + 2 H(+) = coproporphyrin III + Fe(2+). It functions in the pathway porphyrin-containing compound metabolism; protoheme biosynthesis. Its function is as follows. Involved in coproporphyrin-dependent heme b biosynthesis. Catalyzes the insertion of ferrous iron into coproporphyrin III to form Fe-coproporphyrin III. The protein is Coproporphyrin III ferrochelatase 1 of Bacillus cereus (strain ATCC 14579 / DSM 31 / CCUG 7414 / JCM 2152 / NBRC 15305 / NCIMB 9373 / NCTC 2599 / NRRL B-3711).